The sequence spans 306 residues: Nucleotide-binding protein amb4396 (306 aa).

Residues 1-14 are compositionally biased toward polar residues; the sequence is MSDLHSSPTDQTSA. Residues 1–20 form a disordered region; that stretch reads MSDLHSSPTDQTSAPAHAGG. 29 to 36 serves as a coordination point for ATP; the sequence is GMSGAGKT. 77–80 is a GTP binding site; it reads DIRT.

The protein belongs to the RapZ-like family.

Functionally, displays ATPase and GTPase activities. This chain is Nucleotide-binding protein amb4396, found in Paramagnetospirillum magneticum (strain ATCC 700264 / AMB-1) (Magnetospirillum magneticum).